A 312-amino-acid polypeptide reads, in one-letter code: Olfactory receptor 7G3 (312 aa).

The Extracellular portion of the chain corresponds to 1-25 (MKAGNFSDTPEFFLLGLSGDPELQP). N-linked (GlcNAc...) asparagine glycosylation occurs at N5. Residues 26-46 (ILFMLFLSMYLATMLGNLLII) traverse the membrane as a helical segment. Residues 47 to 54 (LAVNSDSH) are Cytoplasmic-facing. A helical transmembrane segment spans residues 55 to 75 (LHTPMYFLLSILSLVDICFTS). The Extracellular segment spans residues 76-99 (TTMPKMLVNIQAQAQSINYTGCLT). An N-linked (GlcNAc...) asparagine glycan is attached at N93. C97 and C189 are disulfide-bonded. Residues 100–120 (QICFVLVFVGLENGILVMMAY) traverse the membrane as a helical segment. Residues 121–139 (DRFVAICHPLRYNVIMNPK) are Cytoplasmic-facing. A helical membrane pass occupies residues 140-160 (LCGLLLLLSFIVSVLDALLHT). The Extracellular segment spans residues 161 to 197 (LMVLQLTFCIDLEIPHFFCELAHILKLACSDVLINNI). The helical transmembrane segment at 198–217 (LVYLVTSLLGVVPLSGIIFS) threads the bilayer. The Cytoplasmic portion of the chain corresponds to 218-237 (YTRIVSSVMKIPSAGGKYKA). Residues 238 to 258 (FSICGSHLIVVSLFYGTGFGV) form a helical membrane-spanning segment. The Extracellular segment spans residues 259–271 (YLSSGATHSSRKG). Residues 272–292 (AIASVMYTVVTPMLNPLIYSL) traverse the membrane as a helical segment. Over 293–312 (RNKDMLKALRKLISRIPSFH) the chain is Cytoplasmic.

It belongs to the G-protein coupled receptor 1 family.

It is found in the cell membrane. Odorant receptor. The polypeptide is Olfactory receptor 7G3 (OR7G3) (Homo sapiens (Human)).